We begin with the raw amino-acid sequence, 105 residues long: U1-sicaritoxin-Li1b (105 aa).

Positions 1–19 (MKLLFEGLLVLVLIAFVVA) are cleaved as a signal peptide. Residues 20 to 36 (EFESDAEKWEALITQER) constitute a propeptide that is removed on maturation. Intrachain disulfides connect Cys-38–Cys-55, Cys-46–Cys-60, Cys-54–Cys-73, and Cys-62–Cys-71. Arg-82 bears the Arginine amide mark. A propeptide spanning residues 86–105 (ALMVDPETHRMLSLHRLSEE) is cleaved from the precursor.

Belongs to the neurotoxin 28 (Litx) family. In terms of tissue distribution, expressed by the venom gland.

Its subcellular location is the secreted. In terms of biological role, toxin active against insects (S.frugiperda larvae). May act on sodium (Nav) or calcium (Cav) channels. This Loxosceles intermedia (Brown spider) protein is U1-sicaritoxin-Li1b.